The chain runs to 270 residues: 1-deoxy-11-beta-hydroxypentalenate dehydrogenase (270 aa).

NAD(+) is bound at residue 12–36 (GAASGIGFALSARLAQAGARVVMTD). S144 contacts substrate. Y157 acts as the Proton acceptor in catalysis. An NAD(+)-binding site is contributed by K161.

The protein belongs to the short-chain dehydrogenases/reductases (SDR) family.

The enzyme catalyses 1-deoxy-11beta-hydroxypentalenate + NAD(+) = 1-deoxy-11-oxopentalenate + NADH + H(+). Its pathway is antibiotic biosynthesis; neopentalenolactone biosynthesis. In terms of biological role, catalyzes the oxidation of 1-deoxy-11-beta-hydroxypentalenic acid to 1-deoxy-11-oxopentalenic acid in the biosynthesis of neopentalenolactone antibiotic. This Streptomyces avermitilis (strain ATCC 31267 / DSM 46492 / JCM 5070 / NBRC 14893 / NCIMB 12804 / NRRL 8165 / MA-4680) protein is 1-deoxy-11-beta-hydroxypentalenate dehydrogenase (ptlF).